Here is a 251-residue protein sequence, read N- to C-terminus: 16S rRNA (guanine(1405)-N(7))-methyltransferase (251 aa).

Residues tyrosine 56, histidine 81–serine 83, arginine 87, alanine 111, aspartate 131, aspartate 157–valine 158, phenylalanine 173, and glutamate 182 each bind S-adenosyl-L-methionine.

It belongs to the methyltransferase superfamily. Aminoglycoside resistance family.

The catalysed reaction is guanosine(1405) in 16S rRNA + S-adenosyl-L-methionine = N(7)-methylguanosine(1405) in 16S rRNA + S-adenosyl-L-homocysteine. Functionally, specifically methylates the N(7) position of guanine 1405 in 16S rRNA. Confers resistance to various aminoglycosides, including kanamycin, tobramycin, amikacin, arbekacin, gentamicin, sisomicin and isepamicin. This chain is 16S rRNA (guanine(1405)-N(7))-methyltransferase (rmtB), found in Serratia marcescens.